A 573-amino-acid polypeptide reads, in one-letter code: Sterol esterase 1 (573 aa).

Residues 1–12 (MGVSAVLKRARN) lie on the Cytoplasmic side of the membrane. An intramembrane segment occupies 13–33 (LLATFIVCCFMAVVLVLALAH). Residues 34 to 573 (HFINEHRDTR…TELEMVAEKA (540 aa)) are Cytoplasmic-facing. Catalysis depends on serine 315, which acts as the Nucleophile. Catalysis depends on charge relay system residues aspartate 489 and histidine 520.

The protein belongs to the AB hydrolase superfamily. Not N-glycosylated.

It is found in the lipid droplet. Its subcellular location is the membrane. The enzyme catalyses a sterol ester + H2O = a sterol + a fatty acid + H(+). In terms of biological role, mediates the hydrolysis of steryl esters, thereby playing a central role in lipid metabolism. Under heme-deficient conditions, it constitutes the major steryl ester hydrolase, suggesting that it plays a central role in mobilization of steryl esters under anaerobic conditions. The protein is Sterol esterase 1 (YEH1) of Saccharomyces cerevisiae (strain ATCC 204508 / S288c) (Baker's yeast).